A 243-amino-acid polypeptide reads, in one-letter code: HTH-type transcriptional regulator MlrA (243 aa).

The HTH merR-type domain occupies 3–72; that stretch reads LYTIGEVALL…VSKVKMLLSN (70 aa). The segment at residues 6 to 25 is a DNA-binding region (H-T-H motif); sequence IGEVALLCDINPVTLRAWQR.

Interacts with DgcM and PdeR.

Its activity is regulated as follows. Activity is regulated by DgcM and PdeR. Activates transcription of csgD, the master regulator of biofilm formation, by binding to its promoter region. Also controls the transcription of cadC and ibaG. Part of a signaling cascade that regulates curli biosynthesis. The cascade is composed of two c-di-GMP control modules, in which c-di-GMP controlled by the DgcE/PdeH pair (module I) regulates the activity of the DgcM/PdeR pair (module II), which in turn regulates activity of the transcription factor MlrA. The polypeptide is HTH-type transcriptional regulator MlrA (Escherichia coli (strain K12)).